The chain runs to 457 residues: Phosphomethylpyrimidine synthase (457 aa).

Residues Asn-80, Met-109, Tyr-139, His-175, 195 to 197 (SRG), 236 to 239 (DSLR), and Glu-275 contribute to the substrate site. His-279 contacts Zn(2+). Residue Tyr-302 coordinates substrate. Position 343 (His-343) interacts with Zn(2+). [4Fe-4S] cluster contacts are provided by Cys-423, Cys-426, and Cys-431.

The protein belongs to the ThiC family. [4Fe-4S] cluster serves as cofactor.

It catalyses the reaction 5-amino-1-(5-phospho-beta-D-ribosyl)imidazole + S-adenosyl-L-methionine = 4-amino-2-methyl-5-(phosphooxymethyl)pyrimidine + CO + 5'-deoxyadenosine + formate + L-methionine + 3 H(+). It functions in the pathway cofactor biosynthesis; thiamine diphosphate biosynthesis. In terms of biological role, catalyzes the synthesis of the hydroxymethylpyrimidine phosphate (HMP-P) moiety of thiamine from aminoimidazole ribotide (AIR) in a radical S-adenosyl-L-methionine (SAM)-dependent reaction. The chain is Phosphomethylpyrimidine synthase from Nostoc sp. (strain PCC 7120 / SAG 25.82 / UTEX 2576).